Here is a 105-residue protein sequence, read N- to C-terminus: Probable guanidinium efflux system subunit GdnD (105 aa).

A run of 4 helical transmembrane segments spans residues M1–M21, W32–E52, A59–Y79, and A85–S105.

Belongs to the drug/metabolite transporter (DMT) superfamily. Small multidrug resistance (SMR) (TC 2.A.7.1) family. YkkC/YkkD subfamily. In terms of assembly, the efflux pump is composed of GdnC and GdnD.

Its subcellular location is the cell membrane. In terms of biological role, probably involved in guanidinium transport. In vitro, confers resistance to a broad range of toxic compounds such as cationic dyes, neutral and anionic antimicrobials. The protein is Probable guanidinium efflux system subunit GdnD of Bacillus subtilis (strain 168).